Here is a 558-residue protein sequence, read N- to C-terminus: MNAPVPVPRVADFTCEKKPATGSRGMVVTNHPLASAAGAQILLAGGNAIDAAVASLFALTVAEPMMVGILGGGLSHIRLADGRHVVIDNLSTAPGKATADMYECLSDEIGKQRDTRDRENVVGAKAVAVPGALKGWCEALARFGTLPLAEVLQPAIGLAERGFVVTPYLSNCITDNAADLARDPGLAAMLLPGGQPLQPGMRLIQSDYAASLKLIAAEGPEALYGGKLGRALTDYMAANGGLIDQADLSNYRIELREPIRGSYRGYEIIGPPPPSSSGVHIAQMLNILEGYDIGALGFGSTDAVHLLAEALKIAFADRAVATADPAFVKVPVARLIDKAYADERRALIAMEQAKSWTAGLSGGESADTTHVTVADAMGNVVSATQTINGLFGACVQTPGTGMIANNYMYNFDPHPGRALSIAPGKRVFTSMAPMMAVKEGRLAFALGLPGALRIFPSALQAIVNLIDHRMSLQEAVEAPRVWTEGGVLELEEAIPESVAQALIARGHKVVRSPRVAGGMNAIAFNPDGTLTGAACWRADGTPVAISGGLARAGARFTI.

Residue threonine 368 is the Nucleophile of the active site.

The protein belongs to the gamma-glutamyltransferase family. As to quaternary structure, dimer of two non-identical chains processed from the same precursor.

It carries out the reaction (7R)-7-(4-carboxybutanamido)cephalosporanate + H2O = (7R)-7-aminocephalosporanate + glutarate. It catalyses the reaction an N-terminal (5-L-glutamyl)-[peptide] + an alpha-amino acid = 5-L-glutamyl amino acid + an N-terminal L-alpha-aminoacyl-[peptide]. The catalysed reaction is glutathione + H2O = L-cysteinylglycine + L-glutamate. The enzyme catalyses an S-substituted glutathione + H2O = an S-substituted L-cysteinylglycine + L-glutamate. Its function is as follows. Besides the cephalosporin acylase I activity which converts GL-7ACA into 7-ACA; this enzyme displays some gamma glutamyltranspeptidase activity. This chain is Acylase ACY 1 proenzyme (acyI), found in Pseudomonas sp. (strain V22).